The following is a 345-amino-acid chain: L-threonine 3-dehydrogenase (345 aa).

C42 provides a ligand contact to Zn(2+). Residues T44 and H47 each act as charge relay system in the active site. Zn(2+) contacts are provided by H67, E68, C97, C100, C103, and C111. Residues I179, D199, R204, 266-268 (LGI), and 290-291 (IY) contribute to the NAD(+) site.

It belongs to the zinc-containing alcohol dehydrogenase family. In terms of assembly, homotetramer. The cofactor is Zn(2+).

The protein localises to the cytoplasm. The catalysed reaction is L-threonine + NAD(+) = (2S)-2-amino-3-oxobutanoate + NADH + H(+). It functions in the pathway amino-acid degradation; L-threonine degradation via oxydo-reductase pathway; glycine from L-threonine: step 1/2. Functionally, catalyzes the NAD(+)-dependent oxidation of L-threonine to 2-amino-3-ketobutyrate. This chain is L-threonine 3-dehydrogenase, found in Rhizobium etli (strain ATCC 51251 / DSM 11541 / JCM 21823 / NBRC 15573 / CFN 42).